Reading from the N-terminus, the 443-residue chain is Protein Z-dependent protease inhibitor (443 aa).

The first 23 residues, 1-23 (MKVVPSLLLSVLLAQVWLVPGLA), serve as a signal peptide directing secretion. The disordered stretch occupies residues 24–66 (PSPQSPETPAPQNQTSRVVQAPREEEEDEQEASEEKAGDEEKA). Asn-36 carries an N-linked (GlcNAc...) asparagine glycan. Position 56 is a phosphoserine (Ser-56). Basic and acidic residues predominate over residues 56–66 (SEEKAGDEEKA). Residues 136 to 153 (TKPGLLPSLFKGLRETLS) are heparin-binding. Asn-180 and Asn-295 each carry an N-linked (GlcNAc...) asparagine glycan.

The protein belongs to the serpin family. Post-translationally, phosphorylated by FAM20C in the extracellular medium.

The protein localises to the secreted. Functionally, inhibits activity of the coagulation protease factor Xa in the presence of PROZ, calcium and phospholipids. Also inhibits factor XIa in the absence of cofactors. The sequence is that of Protein Z-dependent protease inhibitor (SERPINA10) from Pongo abelii (Sumatran orangutan).